A 130-amino-acid chain; its full sequence is Anti-adapter protein IraD (130 aa).

Belongs to the GpW/Gp25 family. IraD subfamily. As to quaternary structure, interacts with RssB.

The protein localises to the cytoplasm. Functionally, inhibits RpoS proteolysis by regulating RssB activity, thereby increasing the stability of the sigma stress factor RpoS during oxidative stress. Its effect on RpoS stability is due to its interaction with RssB, which probably blocks the interaction of RssB with RpoS, and the consequent delivery of the RssB-RpoS complex to the ClpXP protein degradation pathway. The protein is Anti-adapter protein IraD of Shigella boydii serotype 4 (strain Sb227).